Consider the following 619-residue polypeptide: Chaperone protein HscA homolog (619 aa).

The protein belongs to the heat shock protein 70 family.

Its function is as follows. Chaperone involved in the maturation of iron-sulfur cluster-containing proteins. Has a low intrinsic ATPase activity which is markedly stimulated by HscB. The polypeptide is Chaperone protein HscA homolog (Azotobacter vinelandii).